The following is a 319-amino-acid chain: Acetyl-coenzyme A carboxylase carboxyl transferase subunit alpha (319 aa).

The CoA carboxyltransferase C-terminal domain occupies L43–E296.

It belongs to the AccA family. As to quaternary structure, acetyl-CoA carboxylase is a heterohexamer composed of biotin carboxyl carrier protein (AccB), biotin carboxylase (AccC) and two subunits each of ACCase subunit alpha (AccA) and ACCase subunit beta (AccD).

The protein localises to the cytoplasm. The catalysed reaction is N(6)-carboxybiotinyl-L-lysyl-[protein] + acetyl-CoA = N(6)-biotinyl-L-lysyl-[protein] + malonyl-CoA. It participates in lipid metabolism; malonyl-CoA biosynthesis; malonyl-CoA from acetyl-CoA: step 1/1. Functionally, component of the acetyl coenzyme A carboxylase (ACC) complex. First, biotin carboxylase catalyzes the carboxylation of biotin on its carrier protein (BCCP) and then the CO(2) group is transferred by the carboxyltransferase to acetyl-CoA to form malonyl-CoA. The polypeptide is Acetyl-coenzyme A carboxylase carboxyl transferase subunit alpha (Blochmanniella floridana).